We begin with the raw amino-acid sequence, 255 residues long: MLNKIIETKKEEIQNLQLPEQQNVAKRSFLDALSNPNRELALIAEVKKASPSKGLIKENFQPVEIAKAYEKGKADALSVLTDQHYFQGHRTFLSDIKQHVSVPVLRKDFIIDSIQVEESARIGADAILLIGEALEPLKLQELYLQAAEKELDCLVEVHSLETLEKLLAVFTPKIIGINNRNLHTFETSLQQTKEIAKHVPKDQLLVSESGIYLYDDVSYVKEAGAKAILVGESLMRQDNQTKAIEKLFGESEYAH.

The protein belongs to the TrpC family.

The enzyme catalyses 1-(2-carboxyphenylamino)-1-deoxy-D-ribulose 5-phosphate + H(+) = (1S,2R)-1-C-(indol-3-yl)glycerol 3-phosphate + CO2 + H2O. The protein operates within amino-acid biosynthesis; L-tryptophan biosynthesis; L-tryptophan from chorismate: step 4/5. In Priestia megaterium (strain ATCC 12872 / QMB1551) (Bacillus megaterium), this protein is Indole-3-glycerol phosphate synthase (trpC).